We begin with the raw amino-acid sequence, 144 residues long: UPF0102 protein Veis_0630 (144 aa).

The interval 11-31 (PPAAAPGPAPAPASAATASER) is disordered.

This sequence belongs to the UPF0102 family.

In Verminephrobacter eiseniae (strain EF01-2), this protein is UPF0102 protein Veis_0630.